We begin with the raw amino-acid sequence, 339 residues long: Ribosomal RNA large subunit methyltransferase M (339 aa).

Residues Ser-176, 206–209 (APGG), Asp-225, Asp-245, and Asp-261 contribute to the S-adenosyl-L-methionine site. Lys-290 (proton acceptor) is an active-site residue.

It belongs to the class I-like SAM-binding methyltransferase superfamily. RNA methyltransferase RlmE family. RlmM subfamily. As to quaternary structure, monomer.

The protein resides in the cytoplasm. It catalyses the reaction cytidine(2498) in 23S rRNA + S-adenosyl-L-methionine = 2'-O-methylcytidine(2498) in 23S rRNA + S-adenosyl-L-homocysteine + H(+). In terms of biological role, catalyzes the 2'-O-methylation at nucleotide C2498 in 23S rRNA. This is Ribosomal RNA large subunit methyltransferase M from Halorhodospira halophila (strain DSM 244 / SL1) (Ectothiorhodospira halophila (strain DSM 244 / SL1)).